Consider the following 362-residue polypeptide: Glutamate--cysteine ligase (362 aa).

It belongs to the glutamate--cysteine ligase type 2 family. YbdK subfamily.

It catalyses the reaction L-cysteine + L-glutamate + ATP = gamma-L-glutamyl-L-cysteine + ADP + phosphate + H(+). Catalyzes the synthesis of gamma-glutamylcysteine (gamma-GC), the main low-molecular-weight thiol compound instead of glutathione in halophilic archaea. This chain is Glutamate--cysteine ligase, found in Natronomonas pharaonis (strain ATCC 35678 / DSM 2160 / CIP 103997 / JCM 8858 / NBRC 14720 / NCIMB 2260 / Gabara) (Halobacterium pharaonis).